A 524-amino-acid polypeptide reads, in one-letter code: MALQKFPLMGLLLLLTILVSVTTAVDDPVCPATSKLSRASFPNGFLFGTATAAFQVEGAINETCRGPALWDIYCRRNPERCSGDHADVAVDFFHRYKEDIQLMKNLNTDAFRLSIAWSRIFPHGRKEKGVSQAGVQFYHELIDELLKNGIVPFVTVFHWDTPQDLEDEYGGFLSQNIVKDFREYADYVFTEYGGKVKNWITFNEPWVFAHAGYDLGKKAPGRCSRYVPGCEDREGQSGKEAYLVSHNLLNAHAEAVEVFRQKVKGGKIGIAHSPAWFEPHDLKDSNDAPTVSRVLDFMLGWHLEPTTSGDYPQIMKDLLGYRLPQFTAAQKAKLKDSTDFVGLNYYTSTFSNYNEKPDPSKPSWKQDSLVSWEPKNVDHSAIGSMPLTAALPVYAKGFRKLLKYIKDKYANPEIMIMENGYGDKLGTTDSVDVGTADHNRKYYLQRHLLAMNEAICIDKVRVTGYFVWSLLDNFEWQDGYKNRFGLYYVDFKNNLTRYEKESAKYYKDFLAQGVRPSALKRDEL.

The signal sequence occupies residues 1–24 (MALQKFPLMGLLLLLTILVSVTTA). Residue Gln55 coordinates a beta-D-glucoside. N-linked (GlcNAc...) asparagine glycosylation is present at Asn61. A beta-D-glucoside is bound by residues His158 and 203–204 (NE). The active-site Proton donor is Glu204. Cys223 and Cys230 are joined by a disulfide. Residues Tyr346, Glu418, Trp468, 475-476 (EW), and Phe484 each bind a beta-D-glucoside. Glu418 functions as the Nucleophile in the catalytic mechanism. Asn494 carries N-linked (GlcNAc...) asparagine glycosylation. The Prevents secretion from ER motif lies at 521–524 (RDEL).

It belongs to the glycosyl hydrolase 1 family. Component of the PYK10 complex, at least composed of PYK10/BGLU23, BGLU21, BGLU22, JAL22, JAL23, PBP1/JAL30, PBP2/JAL31, JAL32, JAL33, JAL34, JAL35, GLL22 and GLL23. Expressed exclusively in roots.

The protein resides in the endoplasmic reticulum lumen. It carries out the reaction Hydrolysis of terminal, non-reducing beta-D-glucosyl residues with release of beta-D-glucose.. With respect to regulation, activated upon binding to PBP1 or PBP2. Its function is as follows. Beta-D-glucosidase active on scopolin &gt;&gt; esculin &gt;&gt; 4-MU-glucoside &gt; DIMBOA-glucoside. No activity with pNP-glucoside, oNP-glucoside and sinigrin as substrates. This Arabidopsis thaliana (Mouse-ear cress) protein is Beta-glucosidase 21.